The following is a 272-amino-acid chain: Undecaprenyl-diphosphatase (272 aa).

8 helical membrane passes run 2–22 (LELI…WLPI), 50–70 (VIQL…LFPF), 83–103 (FSLW…GVPF), 110–130 (LFYN…LFII), 148–168 (LGYK…IPGT), 195–215 (LAIP…GFAF), 220–240 (LIIL…AIKF), and 250–270 (FKAF…YFLA).

It belongs to the UppP family.

The protein localises to the cell membrane. The enzyme catalyses di-trans,octa-cis-undecaprenyl diphosphate + H2O = di-trans,octa-cis-undecaprenyl phosphate + phosphate + H(+). Its function is as follows. Catalyzes the dephosphorylation of undecaprenyl diphosphate (UPP). Confers resistance to bacitracin. The sequence is that of Undecaprenyl-diphosphatase from Acetivibrio thermocellus (strain ATCC 27405 / DSM 1237 / JCM 9322 / NBRC 103400 / NCIMB 10682 / NRRL B-4536 / VPI 7372) (Clostridium thermocellum).